A 134-amino-acid polypeptide reads, in one-letter code: UPF0102 protein Rmet_3430 (134 aa).

Belongs to the UPF0102 family.

The chain is UPF0102 protein Rmet_3430 from Cupriavidus metallidurans (strain ATCC 43123 / DSM 2839 / NBRC 102507 / CH34) (Ralstonia metallidurans).